The following is a 345-amino-acid chain: Phosphoribosylformylglycinamidine cyclo-ligase (345 aa).

It belongs to the AIR synthase family.

Its subcellular location is the cytoplasm. It catalyses the reaction 2-formamido-N(1)-(5-O-phospho-beta-D-ribosyl)acetamidine + ATP = 5-amino-1-(5-phospho-beta-D-ribosyl)imidazole + ADP + phosphate + H(+). It participates in purine metabolism; IMP biosynthesis via de novo pathway; 5-amino-1-(5-phospho-D-ribosyl)imidazole from N(2)-formyl-N(1)-(5-phospho-D-ribosyl)glycinamide: step 2/2. This is Phosphoribosylformylglycinamidine cyclo-ligase from Shewanella denitrificans (strain OS217 / ATCC BAA-1090 / DSM 15013).